Here is a 1020-residue protein sequence, read N- to C-terminus: Probable leucine-rich repeat receptor-like serine/threonine-protein kinase At3g14840 (1020 aa).

The signal sequence occupies residues 1–26 (MSLNRQLLFTYYFIVSLILFSDFVSS). The Extracellular segment spans residues 27-614 (ATLPKEEVDA…GTGGGSSVGT (588 aa)). N-linked (GlcNAc...) asparagine glycosylation is found at Asn-50 and Asn-81. LRR repeat units lie at residues 86–110 (ICHV…LSGL), 111–134 (PFLQ…WGAS), 136–157 (LLNI…LGNL), 158–181 (TTLS…LGNL), 182–204 (PNLK…TFAK), 206–231 (TTLT…NWKG), 253–276 (LGTL…PLRN), 277–301 (MTSM…LGQN), 302–324 (RKLK…TYSG), and 326–349 (SDVD…MVDQ). 3 N-linked (GlcNAc...) asparagine glycosylation sites follow: Asn-124, Asn-138, and Asn-156. Asn-193 carries N-linked (GlcNAc...) asparagine glycosylation. N-linked (GlcNAc...) asparagine glycans are attached at residues Asn-276 and Asn-289. N-linked (GlcNAc...) asparagine glycosylation is found at Asn-359, Asn-386, Asn-389, Asn-417, Asn-461, Asn-469, and Asn-498. An LRR 11 repeat occupies 479–501 (QARLSAISLTYQALCLGKGNYTV). A helical transmembrane segment spans residues 615 to 635 (VVGSVIASTVFLVLLIGGILW). Residues 636–1020 (WRGCLRPKSQ…LDSAYWNTRT (385 aa)) lie on the Cytoplasmic side of the membrane. Positions 672 to 949 (FDPANKIGEG…VSMLEGHSTV (278 aa)) constitute a Protein kinase domain. ATP is bound by residues 678–686 (IGEGGFGPV) and Lys-700. Phosphotyrosine is present on Tyr-745. Asp-798 functions as the Proton acceptor in the catalytic mechanism. Ser-831 bears the Phosphoserine mark. A phosphothreonine mark is found at Thr-832 and Thr-837. Tyr-845 carries the phosphotyrosine modification.

This sequence belongs to the protein kinase superfamily. Ser/Thr protein kinase family.

It localises to the cell membrane. It carries out the reaction L-seryl-[protein] + ATP = O-phospho-L-seryl-[protein] + ADP + H(+). The enzyme catalyses L-threonyl-[protein] + ATP = O-phospho-L-threonyl-[protein] + ADP + H(+). In Arabidopsis thaliana (Mouse-ear cress), this protein is Probable leucine-rich repeat receptor-like serine/threonine-protein kinase At3g14840 (LRR-RLK).